A 673-amino-acid polypeptide reads, in one-letter code: UvrABC system protein B (673 aa).

Positions 26 to 183 (ANFEAGLAKQ…RHLTDLQYTR (158 aa)) constitute a Helicase ATP-binding domain. 39-46 (GVTGSGKT) contributes to the ATP binding site. Residues 92 to 115 (YYDYYQPEAYVPSSDTFIEKDSSI) carry the Beta-hairpin motif. The Helicase C-terminal domain occupies 431 to 597 (QVDDLMSEIH…SVERPISDIM (167 aa)). The segment at 601-631 (REDAAEKKSGKGRSKSRQVAEETPDYRAMKP) is disordered. Over residues 618-630 (QVAEETPDYRAMK) the composition is skewed to basic and acidic residues. The region spanning 635–670 (AGKLKSLEQKMYQHAKDLEFEAAAQIRDQIQKLKTA) is the UVR domain.

The protein belongs to the UvrB family. Forms a heterotetramer with UvrA during the search for lesions. Interacts with UvrC in an incision complex.

Its subcellular location is the cytoplasm. Its function is as follows. The UvrABC repair system catalyzes the recognition and processing of DNA lesions. A damage recognition complex composed of 2 UvrA and 2 UvrB subunits scans DNA for abnormalities. Upon binding of the UvrA(2)B(2) complex to a putative damaged site, the DNA wraps around one UvrB monomer. DNA wrap is dependent on ATP binding by UvrB and probably causes local melting of the DNA helix, facilitating insertion of UvrB beta-hairpin between the DNA strands. Then UvrB probes one DNA strand for the presence of a lesion. If a lesion is found the UvrA subunits dissociate and the UvrB-DNA preincision complex is formed. This complex is subsequently bound by UvrC and the second UvrB is released. If no lesion is found, the DNA wraps around the other UvrB subunit that will check the other stand for damage. In Xanthomonas oryzae pv. oryzae (strain MAFF 311018), this protein is UvrABC system protein B.